Consider the following 186-residue polypeptide: MGRYAKEPDNPAKSCKARGSNLRVHFKNTRETALAIKRMPLRRAQKFLKNVCEKKECVPFRRFNGGVGRCAQAKHWNTSVGRWPKKSAEFLLQLLKNAEANADYRGLDVDRLVVDHIQVNRAPCLRRRTYRAHGRINPYMSSPCHIELSLTEKEDVVSKAAENEPAKKKLSKKKLQRQKEKMMRNE.

A disordered region spans residues 159 to 186 (KAAENEPAKKKLSKKKLQRQKEKMMRNE). Over residues 177-186 (RQKEKMMRNE) the composition is skewed to basic and acidic residues.

Belongs to the universal ribosomal protein uL22 family.

The polypeptide is Large ribosomal subunit protein uL22 (RpL17) (Aedes albopictus (Asian tiger mosquito)).